Consider the following 517-residue polypeptide: Serine hydroxymethyltransferase 1, mitochondrial (517 aa).

Residues 1–31 (MAMALALRRLSSSADKPLQRLFNGGHLYSMS) constitute a mitochondrion transit peptide. K287 is modified (N6-(pyridoxal phosphate)lysine).

Belongs to the SHMT family. In terms of assembly, homotetramer. It depends on pyridoxal 5'-phosphate as a cofactor.

The protein localises to the mitochondrion. The enzyme catalyses (6R)-5,10-methylene-5,6,7,8-tetrahydrofolate + glycine + H2O = (6S)-5,6,7,8-tetrahydrofolate + L-serine. The protein operates within one-carbon metabolism; tetrahydrofolate interconversion. In terms of biological role, catalyzes the interconversion of serine and glycine. This Flaveria pringlei protein is Serine hydroxymethyltransferase 1, mitochondrial.